We begin with the raw amino-acid sequence, 257 residues long: UPF0259 membrane protein WIGBR3650 (257 aa).

Helical transmembrane passes span 23–43 (IIFF…IFLP), 89–109 (LSSL…INTI), 122–142 (IILS…ISFL), 148–168 (ALML…PILI), 190–210 (IKTV…ILVI), and 223–243 (VKIF…IYMY).

The protein belongs to the UPF0259 family.

The protein localises to the cell membrane. The chain is UPF0259 membrane protein WIGBR3650 from Wigglesworthia glossinidia brevipalpis.